Reading from the N-terminus, the 1212-residue chain is Nucleolar protein 6 (1212 aa).

Disordered stretches follow at residues 1 to 72 (MGKI…PVSI) and 1156 to 1212 (KREQ…KSLS). A compositionally biased stretch (basic residues) spans 1197-1212 (LKRKSLIKSRPLKSLS).

Belongs to the NRAP family. As to quaternary structure, part of the small subunit (SSU) processome, composed of more than 70 proteins and the RNA chaperone small nucleolar RNA (snoRNA) U3.

Its subcellular location is the nucleus. It is found in the nucleolus. It localises to the chromosome. In terms of biological role, part of the small subunit (SSU) processome, first precursor of the small eukaryotic ribosomal subunit. During the assembly of the SSU processome in the nucleolus, many ribosome biogenesis factors, an RNA chaperone and ribosomal proteins associate with the nascent pre-rRNA and work in concert to generate RNA folding, modifications, rearrangements and cleavage as well as targeted degradation of pre-ribosomal RNA by the RNA exosome. This is Nucleolar protein 6 from Drosophila persimilis (Fruit fly).